A 907-amino-acid chain; its full sequence is Translation initiation factor IF-2 (907 aa).

A disordered region spans residues 1-305 (MSEGNDQDQG…SLASVRRQRE (305 aa)). A compositionally biased stretch (gly residues) spans 62–80 (SGSGSSGGGRAGGRGGSGG). Composition is skewed to basic and acidic residues over residues 93–114 (RVLE…EQEK) and 122–158 (EEAR…ERRA). The span at 211–230 (PARPVTPSRPATPAATPQAP) shows a compositional bias: low complexity. Basic and acidic residues-rich tracts occupy residues 240-249 (RVGEAEDDRR) and 271-280 (KGGDSRRSGR). The 171-residue stretch at 406–576 (PRPPVVTVMG…LLQAEMLDLR (171 aa)) folds into the tr-type G domain. The interval 415–422 (GHVDHGKT) is G1. 415–422 (GHVDHGKT) serves as a coordination point for GTP. The G2 stretch occupies residues 440–444 (GITQH). The G3 stretch occupies residues 462–465 (DTPG). GTP contacts are provided by residues 462–466 (DTPGH) and 516–519 (NKCD). The interval 516–519 (NKCD) is G4. Residues 552-554 (SAL) form a G5 region.

The protein belongs to the TRAFAC class translation factor GTPase superfamily. Classic translation factor GTPase family. IF-2 subfamily.

The protein localises to the cytoplasm. Functionally, one of the essential components for the initiation of protein synthesis. Protects formylmethionyl-tRNA from spontaneous hydrolysis and promotes its binding to the 30S ribosomal subunits. Also involved in the hydrolysis of GTP during the formation of the 70S ribosomal complex. The sequence is that of Translation initiation factor IF-2 from Gluconacetobacter diazotrophicus (strain ATCC 49037 / DSM 5601 / CCUG 37298 / CIP 103539 / LMG 7603 / PAl5).